The chain runs to 494 residues: Calmodulin-binding protein 60 A (494 aa).

The segment at 1-62 (MRIPTYDFGS…AGIKWICEKE (62 aa)) is calmodulin-binding. Residues 132–252 (VSDWTDEDIR…AFHRRLNLSN (121 aa)) form a DNA-binding region.

The protein belongs to the plant ACBP60 protein family. As to quaternary structure, interacts with calmodulin (CaM). As to expression, expressed in stems, flowers and root.

The protein resides in the nucleus. Its function is as follows. Transcription activator that binds DNA in a sequence-specific manner, likely 5'-GAAATTTTGG-3', to promote the expression of target genes. The protein is Calmodulin-binding protein 60 A of Arabidopsis thaliana (Mouse-ear cress).